Reading from the N-terminus, the 377-residue chain is tRNA(Met) cytidine acetate ligase (377 aa).

ATP contacts are provided by residues 7–20, G100, N153, and R178; that span reads ITEY…HLFH.

Belongs to the TmcAL family.

The protein resides in the cytoplasm. The enzyme catalyses cytidine(34) in elongator tRNA(Met) + acetate + ATP = N(4)-acetylcytidine(34) in elongator tRNA(Met) + AMP + diphosphate. In terms of biological role, catalyzes the formation of N(4)-acetylcytidine (ac(4)C) at the wobble position of elongator tRNA(Met), using acetate and ATP as substrates. First activates an acetate ion to form acetyladenylate (Ac-AMP) and then transfers the acetyl group to tRNA to form ac(4)C34. This chain is tRNA(Met) cytidine acetate ligase, found in Staphylococcus epidermidis (strain ATCC 35984 / DSM 28319 / BCRC 17069 / CCUG 31568 / BM 3577 / RP62A).